We begin with the raw amino-acid sequence, 729 residues long: Fatty acid oxidation complex subunit alpha (729 aa).

The interval 1–189 (MLYQGETLQL…KVGLVDAVVA (189 aa)) is enoyl-CoA hydratase/isomerase. Asp-296 contacts substrate. The tract at residues 311–729 (EAPKQAAVLG…LSDVSTGQPA (419 aa)) is 3-hydroxyacyl-CoA dehydrogenase. NAD(+) contacts are provided by residues Met-324, Asp-343, 400–402 (VVE), Lys-407, and Ser-429. Catalysis depends on His-450, which acts as the For 3-hydroxyacyl-CoA dehydrogenase activity. An NAD(+)-binding site is contributed by Asn-453. Substrate is bound by residues Asn-500 and Tyr-660.

In the N-terminal section; belongs to the enoyl-CoA hydratase/isomerase family. It in the C-terminal section; belongs to the 3-hydroxyacyl-CoA dehydrogenase family. Heterotetramer of two alpha chains (FadB) and two beta chains (FadA).

It catalyses the reaction a (3S)-3-hydroxyacyl-CoA + NAD(+) = a 3-oxoacyl-CoA + NADH + H(+). The enzyme catalyses a (3S)-3-hydroxyacyl-CoA = a (2E)-enoyl-CoA + H2O. The catalysed reaction is a 4-saturated-(3S)-3-hydroxyacyl-CoA = a (3E)-enoyl-CoA + H2O. It carries out the reaction (3S)-3-hydroxybutanoyl-CoA = (3R)-3-hydroxybutanoyl-CoA. It catalyses the reaction a (3Z)-enoyl-CoA = a 4-saturated (2E)-enoyl-CoA. The enzyme catalyses a (3E)-enoyl-CoA = a 4-saturated (2E)-enoyl-CoA. It participates in lipid metabolism; fatty acid beta-oxidation. Involved in the aerobic and anaerobic degradation of long-chain fatty acids via beta-oxidation cycle. Catalyzes the formation of 3-oxoacyl-CoA from enoyl-CoA via L-3-hydroxyacyl-CoA. It can also use D-3-hydroxyacyl-CoA and cis-3-enoyl-CoA as substrate. The chain is Fatty acid oxidation complex subunit alpha from Serratia proteamaculans (strain 568).